Here is a 454-residue protein sequence, read N- to C-terminus: uncharacterized protein (454 aa).

Positions 1–25 are disordered; it reads MHGPTSKAISRNVRSVKRPRRAPRP. The segment covering 14-23 has biased composition (basic residues); the sequence is RSVKRPRRAP.

The protein localises to the cytoplasm. It is found in the nucleus. This is an uncharacterized protein from Saccharomyces cerevisiae (strain ATCC 204508 / S288c) (Baker's yeast).